The primary structure comprises 415 residues: Dynein assembly factor with WD repeat domains 1 (415 aa).

WD repeat units follow at residues 90-129, 132-174, 175-214, 217-256, 259-298, 301-340, 343-384, and 386-415; these read AHILPLTNVALNKSGSCFITGSYDRTCKLWDTASGEELNT, GHRN…HTFR, GHTAEIVCLSFNPQSTLVATGSMDTTAKLWDIQNGEEVYT, GHSAEIISLSFNTSGDRIITGSFDHTVVVWDADTGRKVNI, GHCAEISSASFNWDCSLILTGSMDKTCKLWDATNGKCVAT, GHDDEILDSCFDYTGKLIATASADGTARIFSAATRKCIAK, GHEG…QVLE, and HTDEIFSCAFNYKGNIVITGSKDNTCRIWR.

It belongs to the WD repeat WDR69 family. Interacts with IFT46.

It localises to the cytoplasm. It is found in the cytoskeleton. The protein localises to the flagellum basal body. Its subcellular location is the flagellum axoneme. Its function is as follows. Required for axonemal dynein assembly and ciliary motility in ciliated organs, including Kupffer's vesicle, during embryogenesis. Facilitates the onset of robust cilia motility during development. The polypeptide is Dynein assembly factor with WD repeat domains 1 (Homo sapiens (Human)).